We begin with the raw amino-acid sequence, 327 residues long: Malate dehydrogenase (327 aa).

11–17 (GAAGNIS) lines the NAD(+) pocket. 2 residues coordinate substrate: R92 and R98. Residues N105, Q112, and 129–131 (VGN) each bind NAD(+). Substrate contacts are provided by N131 and R162. H187 acts as the Proton acceptor in catalysis. The disordered stretch occupies residues 304-327 (SQEKMKATEQELSEERDAVEHLLP).

The protein belongs to the LDH/MDH superfamily. MDH type 2 family.

The catalysed reaction is (S)-malate + NAD(+) = oxaloacetate + NADH + H(+). Its function is as follows. Catalyzes the reversible oxidation of malate to oxaloacetate. The protein is Malate dehydrogenase of Psychrobacter sp. (strain PRwf-1).